Here is a 382-residue protein sequence, read N- to C-terminus: Mannitol-1-phosphate 5-dehydrogenase (382 aa).

Position 3–14 (3–14) interacts with NAD(+); the sequence is ALHFGAGNIGRG.

The protein belongs to the mannitol dehydrogenase family.

It catalyses the reaction D-mannitol 1-phosphate + NAD(+) = beta-D-fructose 6-phosphate + NADH + H(+). The protein is Mannitol-1-phosphate 5-dehydrogenase of Salmonella typhi.